Here is a 112-residue protein sequence, read N- to C-terminus: MADPVYYQGYQDDGDIDAQKRHQALYLIGIIILIMVCIIILWVCIMLACYIPGFLKKTMEAWLSSSSMMKRRVAATITRTPFEATGPERERNWDARRQTNAASSQPSNGGVF.

A helical membrane pass occupies residues 27–47 (LIGIIILIMVCIIILWVCIML). The interval 80-112 (TPFEATGPERERNWDARRQTNAASSQPSNGGVF) is disordered. Residues 86-97 (GPERERNWDARR) show a composition bias toward basic and acidic residues. Residues 98-112 (QTNAASSQPSNGGVF) show a composition bias toward polar residues.

Belongs to the nanovirus movement protein family.

Its subcellular location is the host cell membrane. Its function is as follows. May transport viral genome to neighboring plant cells directly through plasmosdesmata, without any budding. The movement protein allows efficient cell to cell propagation, by bypassing the host cell wall barrier. In Milk vetch dwarf virus (isolate N) (MDV), this protein is Putative movement protein (DNA-M).